The chain runs to 388 residues: Succinate--CoA ligase [ADP-forming] subunit beta (388 aa).

An ATP-grasp domain is found at 9 to 244 (KQLFAEYGLP…PSQDDPREAH (236 aa)). ATP contacts are provided by residues Lys-46, 53 to 55 (GRG), Glu-99, Thr-102, and Glu-107. Positions 199 and 213 each coordinate Mg(2+). Residues Asn-264 and 321–323 (GIV) contribute to the substrate site.

The protein belongs to the succinate/malate CoA ligase beta subunit family. In terms of assembly, heterotetramer of two alpha and two beta subunits. Mg(2+) is required as a cofactor.

It carries out the reaction succinate + ATP + CoA = succinyl-CoA + ADP + phosphate. It catalyses the reaction GTP + succinate + CoA = succinyl-CoA + GDP + phosphate. It participates in carbohydrate metabolism; tricarboxylic acid cycle; succinate from succinyl-CoA (ligase route): step 1/1. Its function is as follows. Succinyl-CoA synthetase functions in the citric acid cycle (TCA), coupling the hydrolysis of succinyl-CoA to the synthesis of either ATP or GTP and thus represents the only step of substrate-level phosphorylation in the TCA. The beta subunit provides nucleotide specificity of the enzyme and binds the substrate succinate, while the binding sites for coenzyme A and phosphate are found in the alpha subunit. The polypeptide is Succinate--CoA ligase [ADP-forming] subunit beta (Stutzerimonas stutzeri (strain A1501) (Pseudomonas stutzeri)).